The sequence spans 542 residues: CTP synthase (542 aa).

The segment at 1 to 265 (MARYIFITGG…DSEVLCAFGI (265 aa)) is amidoligase domain. Ser13 contacts CTP. UTP is bound at residue Ser13. Residue 14-19 (SLGKGI) participates in ATP binding. Residue Tyr54 coordinates L-glutamine. Residue Asp71 participates in ATP binding. Asp71 and Glu139 together coordinate Mg(2+). Residues 146 to 148 (DIE), 186 to 191 (KTKPTQ), and Lys222 contribute to the CTP site. Residues 186-191 (KTKPTQ) and Lys222 each bind UTP. Residues 291 to 541 (TIAVVGKYTG…IEATVEQSRL (251 aa)) form the Glutamine amidotransferase type-1 domain. An L-glutamine-binding site is contributed by Ala353. Cys380 acts as the Nucleophile; for glutamine hydrolysis in catalysis. L-glutamine contacts are provided by residues 381–384 (FGMQ), Glu404, and Arg469. Residues His514 and Glu516 contribute to the active site.

Belongs to the CTP synthase family. Homotetramer.

It carries out the reaction UTP + L-glutamine + ATP + H2O = CTP + L-glutamate + ADP + phosphate + 2 H(+). The catalysed reaction is L-glutamine + H2O = L-glutamate + NH4(+). It catalyses the reaction UTP + NH4(+) + ATP = CTP + ADP + phosphate + 2 H(+). It participates in pyrimidine metabolism; CTP biosynthesis via de novo pathway; CTP from UDP: step 2/2. Allosterically activated by GTP, when glutamine is the substrate; GTP has no effect on the reaction when ammonia is the substrate. The allosteric effector GTP functions by stabilizing the protein conformation that binds the tetrahedral intermediate(s) formed during glutamine hydrolysis. Inhibited by the product CTP, via allosteric rather than competitive inhibition. Its function is as follows. Catalyzes the ATP-dependent amination of UTP to CTP with either L-glutamine or ammonia as the source of nitrogen. Regulates intracellular CTP levels through interactions with the four ribonucleotide triphosphates. The chain is CTP synthase from Bartonella quintana (strain Toulouse) (Rochalimaea quintana).